The primary structure comprises 328 residues: Sphingolipid delta(4)-desaturase DES1-like (328 aa).

The next 3 membrane-spanning stretches (helical) occupy residues 50–70 (PLAF…ATLL), 78–98 (ILTV…LAIH), and 114–134 (WLGI…FQKY). Positions 98–102 (HELSH) match the Histidine box-1 motif. The short motif at 135-139 (HLEHH) is the Histidine box-2 element. 3 helical membrane passes run 164-184 (LSKS…PLFL), 192-212 (WEFT…YFFG), and 217-237 (AYLI…GHFI). Positions 266-270 (HNEHH) match the Histidine box-3 motif.

It belongs to the fatty acid desaturase type 1 family. DEGS subfamily.

The protein localises to the endoplasmic reticulum membrane. The enzyme catalyses an N-acylsphinganine + 2 Fe(II)-[cytochrome b5] + O2 + 2 H(+) = an N-acylsphing-4-enine + 2 Fe(III)-[cytochrome b5] + 2 H2O. In terms of biological role, sphingolipid-delta-4-desaturase required for the biosynthesis of delta-4-unsaturated sphingolipids and derivatives. This Oryza sativa subsp. japonica (Rice) protein is Sphingolipid delta(4)-desaturase DES1-like.